A 31-amino-acid chain; its full sequence is Cyclotide cter-R (31 aa).

Positions 1–31 (GIPCGESCVFIPCTVTALLGCSCKDKVCYKN) form a cross-link, cyclopeptide (Gly-Asn). 3 disulfides stabilise this stretch: Cys-4/Cys-21, Cys-8/Cys-23, and Cys-13/Cys-28.

In terms of processing, this is a cyclic peptide.

The protein localises to the secreted. Probably participates in a plant defense mechanism. The sequence is that of Cyclotide cter-R from Clitoria ternatea (Butterfly pea).